The following is a 955-amino-acid chain: Probable trehalose monomycolate exporter MmpL3 (955 aa).

The Cytoplasmic portion of the chain corresponds to 1–13 (MFAWWGRTVYRYR). A helical transmembrane segment spans residues 14-34 (FIVIGITVALCLCGGVFGLSL). Residues 35 to 190 (GKHVTQSGFY…TIATDQRRME (156 aa)) are Periplasmic-facing. 40 to 44 (QSGFY) serves as a coordination point for a 1,2-diacylglycero-3-phosphoethanolamine. A helical transmembrane segment spans residues 191 to 213 (VLALPLVAVVLFLVFGGVIAACL). The Cytoplasmic segment spans residues 214–219 (PVMVGG). Residues 220–236 (LSIAGALGILRFIALFG) form a helical membrane-spanning segment. Residues 237-244 (PVHFFAQP) are Periplasmic-facing. A helical membrane pass occupies residues 245 to 262 (VVSLIGLGIAVDYGLFVV). Topologically, residues 263-291 (SRFREEIAEGYDTEAAVRRTVMTAGRTVT) are cytoplasmic. Residues 292–312 (FSAVLIAASGASLLLLPQGFV) traverse the membrane as a helical segment. Topologically, residues 313–319 (KSLTYAL) are periplasmic. A helical transmembrane segment spans residues 320–340 (IAAVTLAALLSITLLPACLAI). Residues 341-401 (LAKHVDALGV…KLVNFVMKRP (61 aa)) are Cytoplasmic-facing. Residues 402 to 422 (LVFAIPIVIGMILLVIPLGNL) form a helical membrane-spanning segment. The Periplasmic portion of the chain corresponds to 423-567 (SFGGMSEKYL…HSLVAQAPLM (145 aa)). A helical membrane pass occupies residues 568-588 (VIMLITTTMLLMFLAFGSFVL). The Cytoplasmic segment spans residues 589–591 (PIK). The chain crosses the membrane as a helical span at residues 592–612 (AAVMSALTLGSTMGILTWIFV). Residues 613-621 (DGHLSKWLN) lie on the Periplasmic side of the membrane. Residues 622 to 642 (FTPTPLMVVIIALVVAVGYGL) form a helical membrane-spanning segment. At 643-678 (ATDYEVFLVSRMVEARAESMSTQEAVRIGTASTGRL) the chain is on the cytoplasmic side. The chain crosses the membrane as a helical span at residues 679-699 (ITAAALVLAVVAGSFVFSDLV). The Periplasmic segment spans residues 700-703 (MMKY). A helical membrane pass occupies residues 704–724 (LAFGLMAALLLDATVVRMFLV). The Cytoplasmic segment spans residues 725–955 (PSVMKLLGDD…QDLLRREGRL (231 aa)). Positions 759 to 955 (ERRRPTVSGR…QDLLRREGRL (197 aa)) are disordered. 2 stretches are compositionally biased toward polar residues: residues 821 to 860 (GAST…SQGV) and 890 to 902 (NRSS…TAEP).

The protein belongs to the resistance-nodulation-cell division (RND) (TC 2.A.6) family. MmpL subfamily.

It is found in the cell inner membrane. The protein resides in the cell septum. Its subcellular location is the cell tip. Functionally, transports trehalose monomycolate (TMM) to the cell wall. Flips TMM across the inner membrane. Membrane potential is not required for this function. Transports probably phosphatidylethanolamine (PE) as well. Contributes to membrane potential, cell wall composition, antibiotic susceptibility and fitness. The chain is Probable trehalose monomycolate exporter MmpL3 (mmpL3) from Mycobacterium leprae (strain TN).